The following is a 477-amino-acid chain: Multidrug resistance protein PmpM (477 aa).

Helical transmembrane passes span 21-41 (LLTL…MGFV), 56-76 (AVAL…GTLL), 104-124 (LALL…EPIL), 133-153 (LIGP…AAAL), 171-191 (MVLG…LIYG), 202-222 (GCGW…LFWV), 253-273 (LPIG…ALLI), 286-306 (IALN…MAVT), 326-346 (GVGM…MLLL), 360-380 (VIAI…SDAL), 398-418 (MIMT…SLGL), and 431-451 (LWQG…IRLA).

Belongs to the multi antimicrobial extrusion (MATE) (TC 2.A.66.1) family.

It localises to the cell inner membrane. Multidrug efflux pump that functions as an H(+)/drug antiporter. Confers resistance to benzalkonium chloride, fluoroquinolones, ethidium bromide, acriflavine and tetraphenylphosphonium chloride. The protein is Multidrug resistance protein PmpM (pmpM) of Pseudomonas aeruginosa (strain ATCC 15692 / DSM 22644 / CIP 104116 / JCM 14847 / LMG 12228 / 1C / PRS 101 / PAO1).